The following is a 338-amino-acid chain: MKVLGIESSCDDCCAAIVENGNTILSNIKLSQKEHKKYYGIVPEIASRLHTEFIMYVCQQAIISAKINISEIDLIAVTSQPGLIGSLIVGVNFAKGLSIALKKPLICIDHILGHLYAPLLNHTIEYPFLSLVLSGGHTILAKQNNFDDIEILGRTLDDACGEAFDKIAKHYKMGFPGGPNIEKLAIDGNQYAFNFPITIFDKKENRYDFSYSGLKTACIHQLEKFKNNNAQITNNNIAASFQRAAFENLIIPIKRAIKDTNIKKLIISGGVASNLYLREKIKNLEIETYYPPIDLCTDNAAMIAGIGYLMYLKYGASSIETNANSRIENYKYTKGVKL.

2 residues coordinate Fe cation: histidine 110 and histidine 114. Substrate is bound by residues 132–136 (VLSGG), aspartate 165, glycine 178, and asparagine 274. Position 298 (aspartate 298) interacts with Fe cation.

It belongs to the KAE1 / TsaD family. It depends on Fe(2+) as a cofactor.

The protein resides in the cytoplasm. The catalysed reaction is L-threonylcarbamoyladenylate + adenosine(37) in tRNA = N(6)-L-threonylcarbamoyladenosine(37) in tRNA + AMP + H(+). In terms of biological role, required for the formation of a threonylcarbamoyl group on adenosine at position 37 (t(6)A37) in tRNAs that read codons beginning with adenine. Is involved in the transfer of the threonylcarbamoyl moiety of threonylcarbamoyl-AMP (TC-AMP) to the N6 group of A37, together with TsaE and TsaB. TsaD likely plays a direct catalytic role in this reaction. This Borrelia recurrentis (strain A1) protein is tRNA N6-adenosine threonylcarbamoyltransferase.